The following is a 295-amino-acid chain: Acetyl-coenzyme A carboxylase carboxyl transferase subunit beta (295 aa).

Positions Met1–Lys20 are disordered. In terms of domain architecture, CoA carboxyltransferase N-terminal spans Leu28–Ala295. 4 residues coordinate Zn(2+): Cys32, Cys35, Cys51, and Cys54. The C4-type zinc-finger motif lies at Cys32 to Cys54.

The protein belongs to the AccD/PCCB family. In terms of assembly, acetyl-CoA carboxylase is a heterohexamer composed of biotin carboxyl carrier protein (AccB), biotin carboxylase (AccC) and two subunits each of ACCase subunit alpha (AccA) and ACCase subunit beta (AccD). The cofactor is Zn(2+).

It localises to the cytoplasm. The catalysed reaction is N(6)-carboxybiotinyl-L-lysyl-[protein] + acetyl-CoA = N(6)-biotinyl-L-lysyl-[protein] + malonyl-CoA. It participates in lipid metabolism; malonyl-CoA biosynthesis; malonyl-CoA from acetyl-CoA: step 1/1. Functionally, component of the acetyl coenzyme A carboxylase (ACC) complex. Biotin carboxylase (BC) catalyzes the carboxylation of biotin on its carrier protein (BCCP) and then the CO(2) group is transferred by the transcarboxylase to acetyl-CoA to form malonyl-CoA. This is Acetyl-coenzyme A carboxylase carboxyl transferase subunit beta from Xanthomonas euvesicatoria pv. vesicatoria (strain 85-10) (Xanthomonas campestris pv. vesicatoria).